The sequence spans 270 residues: Hemin import ATP-binding protein HmuV (270 aa).

The 238-residue stretch at 5–242 (LEAEAATYSV…SLINRVFDIE (238 aa)) folds into the ABC transporter domain. 37-44 (GPNGAGKS) lines the ATP pocket.

It belongs to the ABC transporter superfamily. Heme (hemin) importer (TC 3.A.1.14.5) family. In terms of assembly, the complex is composed of two ATP-binding proteins (HmuV), two transmembrane proteins (HmuU) and a solute-binding protein (HmuT).

The protein resides in the cell inner membrane. Its function is as follows. Part of the ABC transporter complex HmuTUV involved in hemin import. Responsible for energy coupling to the transport system. This Rhodopseudomonas palustris (strain BisA53) protein is Hemin import ATP-binding protein HmuV.